A 276-amino-acid polypeptide reads, in one-letter code: Rhomboid protease GlpG (276 aa).

A run of 6 helical transmembrane segments spans residues glycine 94–leucine 114, alanine 142–glycine 162, leucine 169–glutamine 189, phenylalanine 192–tryptophan 212, leucine 229–methionine 249, and alanine 250–leucine 270. Residue serine 201 is the Nucleophile of the active site. The active site involves histidine 254.

The protein belongs to the peptidase S54 family.

It is found in the cell inner membrane. It catalyses the reaction Cleaves type-1 transmembrane domains using a catalytic dyad composed of serine and histidine that are contributed by different transmembrane domains.. Its function is as follows. Rhomboid-type serine protease that catalyzes intramembrane proteolysis. The protein is Rhomboid protease GlpG of Escherichia fergusonii (strain ATCC 35469 / DSM 13698 / CCUG 18766 / IAM 14443 / JCM 21226 / LMG 7866 / NBRC 102419 / NCTC 12128 / CDC 0568-73).